Consider the following 282-residue polypeptide: MALKYYKPTTNGRRHMSSLDFGANLTTNKPEKSLLTILKKHSGRNSQGKITVRHQGGRHKRKYRLIDFKRNKDDITGIVKTIEYDPNRSANIALISYIDGEKRYILAPKNLKVGQKISSGPKSDILVGNALPLAKIPEGTFVHNIELKPGAGAKLIRSAGTWAQIQGRDENGKYVILKLKSGEYRRILATCRATIGVVGNEENSLVNIGKAGRNRHKGIRPTVRGSVMNPNDHPHGGGEGKQPIGRKSPLTPWGKKALGVKTRNPKKPSTKLIIRSRKETKK.

The segment at Arg215–Lys282 is disordered. The span at Arg263–Lys282 shows a compositional bias: basic residues.

The protein belongs to the universal ribosomal protein uL2 family. Part of the 50S ribosomal subunit. Forms a bridge to the 30S subunit in the 70S ribosome.

One of the primary rRNA binding proteins. Required for association of the 30S and 50S subunits to form the 70S ribosome, for tRNA binding and peptide bond formation. It has been suggested to have peptidyltransferase activity; this is somewhat controversial. Makes several contacts with the 16S rRNA in the 70S ribosome. In Mesomycoplasma hyopneumoniae (strain J / ATCC 25934 / NCTC 10110) (Mycoplasma hyopneumoniae), this protein is Large ribosomal subunit protein uL2.